The chain runs to 92 residues: Large ribosomal subunit protein bL27 (92 aa).

Positions 1–9 are excised as a propeptide; it reads MIKANLQLF.

Belongs to the bacterial ribosomal protein bL27 family. Post-translationally, the N-terminus is cleaved by ribosomal processing cysteine protease Prp.

The polypeptide is Large ribosomal subunit protein bL27 (Acetivibrio thermocellus (strain ATCC 27405 / DSM 1237 / JCM 9322 / NBRC 103400 / NCIMB 10682 / NRRL B-4536 / VPI 7372) (Clostridium thermocellum)).